Consider the following 92-residue polypeptide: Small ribosomal subunit protein bS20 (92 aa).

Over residues 1-11 (MANIKSQKKRI) the composition is skewed to basic residues. The tract at residues 1–22 (MANIKSQKKRIRQNEKARLRNK) is disordered.

Belongs to the bacterial ribosomal protein bS20 family.

In terms of biological role, binds directly to 16S ribosomal RNA. The polypeptide is Small ribosomal subunit protein bS20 (Thermobifida fusca (strain YX)).